The following is a 32-amino-acid chain: Photosystem II reaction center protein T (32 aa).

A helical membrane pass occupies residues 3–23; that stretch reads ALVYTFLLIGTLIVIFFAVFF.

The protein belongs to the PsbT family. As to quaternary structure, PSII is composed of 1 copy each of membrane proteins PsbA, PsbB, PsbC, PsbD, PsbE, PsbF, PsbH, PsbI, PsbJ, PsbK, PsbL, PsbM, PsbT, PsbX, PsbY, PsbZ, Psb30/Ycf12, at least 3 peripheral proteins of the oxygen-evolving complex and a large number of cofactors. It forms dimeric complexes.

The protein localises to the plastid. It localises to the chloroplast thylakoid membrane. In terms of biological role, found at the monomer-monomer interface of the photosystem II (PS II) dimer, plays a role in assembly and dimerization of PSII. PSII is a light-driven water plastoquinone oxidoreductase, using light energy to abstract electrons from H(2)O, generating a proton gradient subsequently used for ATP formation. The chain is Photosystem II reaction center protein T from Phaeodactylum tricornutum (strain CCAP 1055/1).